The primary structure comprises 361 residues: NAD(P)H-quinone oxidoreductase subunit 1, chloroplastic (361 aa).

The next 6 helical transmembrane spans lie at 25 to 45 (IWLL…VLVI), 102 to 122 (VAVV…HLVL), 125 to 145 (LSIG…GLLM), 246 to 266 (YSGI…LVSS), 298 to 318 (VFGT…FLFI), and 334 to 354 (LLNL…LLTT).

Belongs to the complex I subunit 1 family. As to quaternary structure, NDH is composed of at least 16 different subunits, 5 of which are encoded in the nucleus.

Its subcellular location is the plastid. It is found in the chloroplast thylakoid membrane. The catalysed reaction is a plastoquinone + NADH + (n+1) H(+)(in) = a plastoquinol + NAD(+) + n H(+)(out). It carries out the reaction a plastoquinone + NADPH + (n+1) H(+)(in) = a plastoquinol + NADP(+) + n H(+)(out). Functionally, NDH shuttles electrons from NAD(P)H:plastoquinone, via FMN and iron-sulfur (Fe-S) centers, to quinones in the photosynthetic chain and possibly in a chloroplast respiratory chain. The immediate electron acceptor for the enzyme in this species is believed to be plastoquinone. Couples the redox reaction to proton translocation, and thus conserves the redox energy in a proton gradient. The chain is NAD(P)H-quinone oxidoreductase subunit 1, chloroplastic from Nymphaea alba (White water-lily).